The chain runs to 91 residues: Large ribosomal subunit protein uL22 (91 aa).

The protein belongs to the universal ribosomal protein uL22 family. As to quaternary structure, part of the 50S ribosomal subunit.

In terms of biological role, this protein binds specifically to 23S rRNA; its binding is stimulated by other ribosomal proteins, e.g. L4, L17, and L20. It is important during the early stages of 50S assembly. It makes multiple contacts with different domains of the 23S rRNA in the assembled 50S subunit and ribosome. Its function is as follows. The globular domain of the protein is located near the polypeptide exit tunnel on the outside of the subunit, while an extended beta-hairpin is found that lines the wall of the exit tunnel in the center of the 70S ribosome. The sequence is that of Large ribosomal subunit protein uL22 (rplV) from Loofah witches'-broom phytoplasma.